The primary structure comprises 297 residues: tRNA (guanine-N(7)-)-methyltransferase (297 aa).

Residues Gly101, 124-125 (EI), 171-172 (NT), and Cys191 contribute to the S-adenosyl-L-methionine site. Asp194 is an active-site residue. 270–272 (TEE) contacts S-adenosyl-L-methionine.

This sequence belongs to the class I-like SAM-binding methyltransferase superfamily. TrmB family. As to quaternary structure, forms a complex with trm82.

The protein localises to the nucleus. The catalysed reaction is guanosine(46) in tRNA + S-adenosyl-L-methionine = N(7)-methylguanosine(46) in tRNA + S-adenosyl-L-homocysteine. The protein operates within tRNA modification; N(7)-methylguanine-tRNA biosynthesis. Catalyzes the formation of N(7)-methylguanine at position 46 (m7G46) in tRNA. The protein is tRNA (guanine-N(7)-)-methyltransferase (trm8) of Aspergillus niger (strain ATCC MYA-4892 / CBS 513.88 / FGSC A1513).